A 100-amino-acid polypeptide reads, in one-letter code: Urease subunit gamma (100 aa).

Belongs to the urease gamma subunit family. Heterotrimer of UreA (gamma), UreB (beta) and UreC (alpha) subunits. Three heterotrimers associate to form the active enzyme.

It localises to the cytoplasm. It catalyses the reaction urea + 2 H2O + H(+) = hydrogencarbonate + 2 NH4(+). Its pathway is nitrogen metabolism; urea degradation; CO(2) and NH(3) from urea (urease route): step 1/1. The sequence is that of Urease subunit gamma from Prochlorococcus marinus (strain MIT 9313).